Here is a 331-residue protein sequence, read N- to C-terminus: Phenylalanine--tRNA ligase alpha subunit (331 aa).

Glu252 provides a ligand contact to Mg(2+).

Belongs to the class-II aminoacyl-tRNA synthetase family. Phe-tRNA synthetase alpha subunit type 1 subfamily. Tetramer of two alpha and two beta subunits. The cofactor is Mg(2+).

The protein resides in the cytoplasm. The enzyme catalyses tRNA(Phe) + L-phenylalanine + ATP = L-phenylalanyl-tRNA(Phe) + AMP + diphosphate + H(+). The sequence is that of Phenylalanine--tRNA ligase alpha subunit from Xanthomonas oryzae pv. oryzae (strain MAFF 311018).